A 1096-amino-acid chain; its full sequence is MARLSSIVFIICLLLCNNAISDEVIESPSSGGTLSGGGSGTDTVTGTQDGKGKSEGKGNEGGQTDQKGKENPENGQNSDSTGDSSLGSTGSNGSQPAPTTPKEPEPTTPKEPESATPKASEPVTPQKTAETASGKQVSPTPSENPPSKDTPKPESSSEKKVNSALATPPAPEVSKAQEGAGLATQKEQTPSKRAKRSPPPQVNNITDMESYLMKNYDGVKVIGLCGVYFRVQFSPHLLLYGLTTFSIIQIEPFFEGVRIDFEHQHPIRNKCAPGKAFAFISYVKDNILILKWKVFAPPSDLFANDEVSKQILSAVSVTSDAESSVVDVRKYRLPQLDRPFTSIQVYKANPKQGLLETKNYILKNAIPEKCSKISMNCFLNGNVNIENCFKCTLLVQNAKPTDECFQYLPSDMKNNLNEIKVTAQSDEDSKENDLIESIEILLNSFYKADKKAKKLSLITMDDFDDVLRAELFNYCKLLKELDTKKTLENAELGNEIDIFNNLLRLLKTNEEESKHNLYKKLRNTAICLKDVNKWAEKKRGLILPEEVTQDQMAIGQNEEPYDEDPDDRVDLLELFDDNQNENIVDKDGIIDMSIAIKYAKLKSPYFNSSKYCNYEYCDRWQDKTSCISNIDVEEQGNCSLCWLFASKLHLETIRCMRGYGHNRSSALYVANCSKRTAEEICNDGSNPLEFLKILEKNKFLPLESNYPYLWKNVSGKCPNPQNDWTNLWGNTKLLYNNMFGQFIKHRGYIVYSSRFFAKNMNVFIDIIKREIRNKGSVIAYIKTQGVIDYDFNGRYISNICGHNHPDHAVNIIGYGNYISESGEKRSYWLIRNSWGYYWGHEGNFKVDVLGPDNCVHNVIHTAIVFKIDMEPDSDSNNNNAIKNRDQLIDEDNKSYFPQLSSNFYHSLYYNNYEGYEAKNDDENDQNYGNLDVSGQSENHQNDPKNPQPQANSTVTQLGVCPAENQRTADSNPNAQSTPSPNTTVTDTVNSNTANSNTANSNTASANAASIEKKIQILHVLKHIEKYKMTRGFVKYDNLNDTKNDYTCARSYSYDPKNHNECKQFCEENWERCKNHYSPGYCLTTLSGKNKCLFCYV.

An N-terminal signal peptide occupies residues 1–21 (MARLSSIVFIICLLLCNNAIS). Residues 28-205 (PSSGGTLSGG…RSPPPQVNNI (178 aa)) are disordered. A compositionally biased stretch (low complexity) spans 77–97 (NSDSTGDSSLGSTGSNGSQPA). A glycan (N-linked (GlcNAc...) asparagine) is linked at N92. Basic and acidic residues predominate over residues 102-113 (KEPEPTTPKEPE). The span at 123–147 (VTPQKTAETASGKQVSPTPSENPPS) shows a compositional bias: polar residues. Residues 149–161 (DTPKPESSSEKKV) are compositionally biased toward basic and acidic residues. N204, N607, N637, N662, N671, N712, N892, and N951 each carry an N-linked (GlcNAc...) asparagine glycan. Disordered regions lie at residues 916–952 (EAKN…QANS) and 964–1006 (NQRT…ASAN). Composition is skewed to polar residues over residues 925–952 (QNYG…QANS) and 964–975 (NQRTADSNPNAQ). The span at 976–1006 (STPSPNTTVTDTVNSNTANSNTANSNTASAN) shows a compositional bias: low complexity. 2 N-linked (GlcNAc...) asparagine glycosylation sites follow: N981 and N1039.

The protein belongs to the peptidase C1 family. Proteolytically cleaved in both blood and liver stage parasites. Precursor of 130 kDa is processed into 72 kDa and 55 kDa forms. Proteolytically cleaved by SUB1.

The protein resides in the cell membrane. It is found in the parasitophorous vacuole. Its subcellular location is the secreted. It localises to the host cytoplasm. Its function is as follows. Putative cysteine protease. Probably involved in merozoite release from the parasitophorous vacuole during liver stages. In Plasmodium berghei (strain Anka), this protein is Serine-repeat antigen protein 3.